The sequence spans 488 residues: Kynurenine 3-monooxygenase 2 (488 aa).

It belongs to the aromatic-ring hydroxylase family. KMO subfamily. FAD serves as cofactor.

It is found in the mitochondrion outer membrane. It carries out the reaction L-kynurenine + NADPH + O2 + H(+) = 3-hydroxy-L-kynurenine + NADP(+) + H2O. It participates in cofactor biosynthesis; NAD(+) biosynthesis; quinolinate from L-kynurenine: step 1/3. Functionally, catalyzes the hydroxylation of L-kynurenine (L-Kyn) to form 3-hydroxy-L-kynurenine (L-3OHKyn). Required for synthesis of quinolinic acid. The polypeptide is Kynurenine 3-monooxygenase 2 (bna4-2) (Aspergillus niger (strain ATCC MYA-4892 / CBS 513.88 / FGSC A1513)).